The chain runs to 504 residues: ATP synthase subunit beta (504 aa).

The disordered stretch occupies residues 1–23 (MAKAATPKETAAAKKPAAPKKAA). Position 182 to 189 (182 to 189 (GGAGVGKT)) interacts with ATP.

Belongs to the ATPase alpha/beta chains family. In terms of assembly, F-type ATPases have 2 components, CF(1) - the catalytic core - and CF(0) - the membrane proton channel. CF(1) has five subunits: alpha(3), beta(3), gamma(1), delta(1), epsilon(1). CF(0) has three main subunits: a(1), b(2) and c(9-12). The alpha and beta chains form an alternating ring which encloses part of the gamma chain. CF(1) is attached to CF(0) by a central stalk formed by the gamma and epsilon chains, while a peripheral stalk is formed by the delta and b chains.

Its subcellular location is the cell inner membrane. It carries out the reaction ATP + H2O + 4 H(+)(in) = ADP + phosphate + 5 H(+)(out). Its function is as follows. Produces ATP from ADP in the presence of a proton gradient across the membrane. The catalytic sites are hosted primarily by the beta subunits. This chain is ATP synthase subunit beta, found in Rhizobium meliloti (strain 1021) (Ensifer meliloti).